The sequence spans 447 residues: Exodeoxyribonuclease 7 large subunit (447 aa).

It belongs to the XseA family. As to quaternary structure, heterooligomer composed of large and small subunits.

The protein resides in the cytoplasm. The enzyme catalyses Exonucleolytic cleavage in either 5'- to 3'- or 3'- to 5'-direction to yield nucleoside 5'-phosphates.. Functionally, bidirectionally degrades single-stranded DNA into large acid-insoluble oligonucleotides, which are then degraded further into small acid-soluble oligonucleotides. This is Exodeoxyribonuclease 7 large subunit from Pediococcus pentosaceus (strain ATCC 25745 / CCUG 21536 / LMG 10740 / 183-1w).